The following is a 1243-amino-acid chain: Zinc finger protein ZFAT (1243 aa).

The C2H2-type 1 zinc-finger motif lies at 12 to 35 (FMCKCCNLFSPNQSELLSHVSEKH). Disordered stretches follow at residues 51–116 (PLST…PSSL) and 147–189 (GEAG…GKEA). Residues 70–81 (MKRKRGRPKGST) show a composition bias toward basic residues. The C2H2-type 2; degenerate zinc finger occupies 116–141 (LECSKCCRKFSNTRQLRKHICIIVLN). Over residues 156-189 (ELEKKCKEDDREKASKRPRSQKTEKVQKISGKEA) the composition is skewed to basic and acidic residues. C2H2-type zinc fingers lie at residues 271–293 (FTCE…LRIH), 299–321 (YKCP…LRKH), 326–349 (FACD…ERVH), 354–377 (QHCR…RDAH), 404–426 (YDCH…MLVH), 432–454 (FACE…VRKH), and 458–481 (YVCA…KEVH). Cysteine 273, cysteine 276, histidine 289, histidine 293, cysteine 301, cysteine 304, histidine 317, histidine 321, cysteine 328, cysteine 331, histidine 344, histidine 349, cysteine 356, cysteine 359, histidine 372, histidine 377, cysteine 406, cysteine 409, histidine 422, and histidine 426 together coordinate Zn(2+). Zn(2+)-binding residues include cysteine 460, cysteine 463, histidine 476, and histidine 481. Disordered regions lie at residues 534-570 (EACP…AEST), 603-625 (TSSA…SSVQ), and 638-705 (AQSA…CKAA). Over residues 610–620 (AAPEKPPDMQH) the composition is skewed to basic and acidic residues. Residues 638 to 650 (AQSAGSDQESHGA) show a composition bias toward polar residues. C2H2-type zinc fingers lie at residues 742-764 (LECE…VRTH), 770-793 (YYCS…IQKH), 798-822 (LKCP…LKVH), 830-853 (YSCP…KTNH), 880-903 (MKCP…IWAH), 909-931 (FKCS…MNRH), 937-959 (HLCD…KLLH), 966-988 (FKCT…MEQH), 994-1017 (FRCA…NRKH), and 1041-1064 (LKCP…KNKH). 24 residues coordinate Zn(2+): cysteine 772, cysteine 775, histidine 788, histidine 793, cysteine 800, cysteine 805, histidine 818, histidine 822, cysteine 832, cysteine 835, histidine 848, histidine 853, cysteine 882, cysteine 885, histidine 899, histidine 903, cysteine 911, cysteine 914, histidine 927, histidine 931, cysteine 939, cysteine 942, histidine 955, and leucine 958.

In terms of tissue distribution, isoform 1 is strongly expressed in placenta, spleen, kidney, testis and peripheral blood leukocytes. Expressed in CD4+ and CD8+ T-cells, CD19+ B-cells and CB14+ monocytes. Isoform 3 is strongly expressed in placenta, ovary, tonsil, CD19+ B-cells and CD14+ monocytes.

It is found in the nucleus. The protein resides in the cytoplasm. Its subcellular location is the cytosol. May be involved in transcriptional regulation. Overexpression causes down-regulation of a number of genes involved in the immune response. Some genes are also up-regulated. The sequence is that of Zinc finger protein ZFAT (ZFAT) from Homo sapiens (Human).